Here is a 137-residue protein sequence, read N- to C-terminus: Dormancy-associated protein homolog 3 (137 aa).

2 disordered regions span residues 1–55 (MGLL…DSLP) and 69–137 (KPPG…TYGM). Polar residues predominate over residues 32–43 (FRPSSGNDQSEA). The segment covering 70 to 87 (PPGYQGSSAPASPAGSTP) has biased composition (low complexity). Residue serine 81 is modified to Phosphoserine. The span at 88-97 (PLSPFSPPLS) shows a compositional bias: pro residues. Residues 104–118 (EPFRFRRRSTSDAFE) are compositionally biased toward basic and acidic residues. Polar residues predominate over residues 127-137 (GPRSSPPTYGM).

It belongs to the DRM1/ARP family.

The protein is Dormancy-associated protein homolog 3 of Arabidopsis thaliana (Mouse-ear cress).